Consider the following 236-residue polypeptide: MPDTPSPRDRLIVALDMATTDEAERLIDRLGDAASFYKIGYRLGYAGGLALAERLVKGGAKVFLDLKLHDIGNTVEEGVQSLARLGAHLLTVHAYPQTMRAAVRGRDSVPGSALRLLAVTVLTSYDDADAREAGYALSVSELVAIRALAAREIGIDGIVCAATEAAQVREIVGPDGLIVTPGIRPAGSDTGDQKRVVTPAAAIRAGVDYIVVGRPITAAADPRAVAQSIVAEIAAA.

Residues aspartate 16, lysine 38, 65–74, threonine 123, arginine 184, glutamine 193, glycine 213, and arginine 214 contribute to the substrate site; that span reads DLKLHDIGNT. The active-site Proton donor is the lysine 67.

This sequence belongs to the OMP decarboxylase family. Type 1 subfamily. As to quaternary structure, homodimer.

It catalyses the reaction orotidine 5'-phosphate + H(+) = UMP + CO2. It participates in pyrimidine metabolism; UMP biosynthesis via de novo pathway; UMP from orotate: step 2/2. Its function is as follows. Catalyzes the decarboxylation of orotidine 5'-monophosphate (OMP) to uridine 5'-monophosphate (UMP). This Methylobacterium nodulans (strain LMG 21967 / CNCM I-2342 / ORS 2060) protein is Orotidine 5'-phosphate decarboxylase.